The primary structure comprises 182 residues: MFRTFGRRLVSCTLPLLQSAPHDLPEGFEFMEHKVVNKDIHAPHENLEXLRLTLTRQDEFLLREEPVKCVTVTGTNGEYGIYPGHAYKIVQLNPSPLTVEYTDGTTKKYFVSGGFAHINNEGSCDVNTVECTLLDDLDLAIAEKELAAQQAALGSAKDDKAKSVVEIRISVIEAVIAALKHH.

The transit peptide at 1–17 (MFRTFGRRLVSCTLPLL) directs the protein to the mitochondrion.

Belongs to the ATPase epsilon chain family. As to quaternary structure, F-type ATPases have 2 components, F(1) - the catalytic core - and F(o) - the membrane proton channel. F(1) has five subunits: alpha(3), beta(3), gamma(1), delta(1), epsilon(1), plus the additional subunit P18 (Tb427.05.1710) that is not present in F(1)F(o) ATP synthase from metazoa. Subunit P18 (Tb927.5.1710) interacts with the alpha subunit with a 1:1 stoichiometry; the interaction is direct. Subunit gamma is part of the central stalk. F(o) has three main subunits: a, b and c. The trypanosomal ATPase complex contains additional subunits that are not present in the F(1)F(o) ATP synthase from metazoa.

The protein resides in the mitochondrion. It localises to the mitochondrion inner membrane. Mitochondrial membrane ATP synthase (F(1)F(o) ATP synthase) produces ATP from ADP in the presence of a proton gradient across the membrane which is generated by electron transport complexes of the respiratory chain. F-type ATPases consist of two structural domains, F(1) - containing the extramembraneous catalytic core, and F(o) - containing the membrane proton channel, linked together by a central stalk and a peripheral stalk. During catalysis, ATP synthesis in the catalytic domain of F(1) is coupled via a rotary mechanism of the central stalk subunits to proton translocation. Subunits alpha and beta form the catalytic core in F(1). Rotation of the central stalk against the surrounding alpha(3)beta(3) subunits leads to hydrolysis of ATP in three separate catalytic sites on the beta subunits. Contrary to the procyclic, insect form that requires F(1)F(o) ATP synthase for ATP synthesis, the bloodstream form relies on ATP hydrolysis by F(1)F(o) ATP synthase to maintain its mitochondrial membrane potential. The polypeptide is ATP synthase subunit delta, mitochondrial (Trypanosoma brucei brucei).